Reading from the N-terminus, the 346-residue chain is Bifunctional phosphatase IMPL2, chloroplastic (346 aa).

The N-terminal 61 residues, 1–61, are a transit peptide targeting the chloroplast; the sequence is MLAQSHFFSK…VSRRRFCLTM (61 aa). Residues Glu-147, Asp-165, and Asp-168 each contribute to the Mg(2+) site. Glu-147 is a binding site for substrate. Residues 167–170, 263–265, Glu-282, and Asp-289 contribute to the substrate site; these read IDGT and GCD. Asp-289 is a Mg(2+) binding site.

This sequence belongs to the inositol monophosphatase superfamily. Mg(2+) is required as a cofactor. As to expression, ubiquitous. High expression in roots. Expressed in pistil and seed endosperm.

Its subcellular location is the plastid. It is found in the chloroplast. It catalyses the reaction a myo-inositol phosphate + H2O = myo-inositol + phosphate. The catalysed reaction is L-histidinol phosphate + H2O = L-histidinol + phosphate. It carries out the reaction beta-L-galactose 1-phosphate + H2O = L-galactose + phosphate. It participates in amino-acid biosynthesis; L-histidine biosynthesis; L-histidine from 5-phospho-alpha-D-ribose 1-diphosphate: step 8/9. It functions in the pathway polyol metabolism; myo-inositol biosynthesis; myo-inositol from D-glucose 6-phosphate: step 2/2. Phosphatase required for histidine production. Also acts on L-galactose 1-phosphate (L-Gal 1-P), D-myoinositol 3-phosphate (D-Ins 3-P) and D-myoinositol 1-phosphate (D-Ins 1-P). The protein is Bifunctional phosphatase IMPL2, chloroplastic (HISN7) of Arabidopsis thaliana (Mouse-ear cress).